Consider the following 307-residue polypeptide: Ornithine carbamoyltransferase (307 aa).

Residues 50–53 (STRT), glutamine 77, arginine 101, and 128–131 (HPCQ) contribute to the carbamoyl phosphate site. Residues asparagine 160, aspartate 224, and 228-229 (SM) contribute to the L-ornithine site. Residues 264–265 (CL) and arginine 292 each bind carbamoyl phosphate.

It belongs to the aspartate/ornithine carbamoyltransferase superfamily. OTCase family. In terms of assembly, homotrimer.

It is found in the cytoplasm. The catalysed reaction is carbamoyl phosphate + L-ornithine = L-citrulline + phosphate + H(+). It functions in the pathway amino-acid biosynthesis; L-arginine biosynthesis; L-arginine from L-ornithine and carbamoyl phosphate: step 1/3. In terms of biological role, reversibly catalyzes the transfer of the carbamoyl group from carbamoyl phosphate (CP) to the N(epsilon) atom of ornithine (ORN) to produce L-citrulline, which is a substrate for argininosuccinate synthetase, the enzyme involved in the final step in arginine biosynthesis. This is Ornithine carbamoyltransferase (argF) from Mycobacterium bovis (strain ATCC BAA-935 / AF2122/97).